A 475-amino-acid chain; its full sequence is NADP-dependent glyceraldehyde-3-phosphate dehydrogenase (475 aa).

Arg103 contacts substrate. Ser151 serves as a coordination point for NADP(+). Substrate is bound at residue Asn154 to Tyr155. NADP(+) is bound by residues Lys177, Thr180, Asp215, and Gly230–Leu251. Catalysis depends on residues Glu250 and Cys284. Position 283 to 285 (Arg283 to Thr285) interacts with substrate. Glu377 is a binding site for NADP(+). Arg437 provides a ligand contact to substrate.

The protein belongs to the aldehyde dehydrogenase family. As to quaternary structure, homotetramer.

It catalyses the reaction D-glyceraldehyde 3-phosphate + NADP(+) + H2O = (2R)-3-phosphoglycerate + NADPH + 2 H(+). In Streptococcus mutans serotype c (strain ATCC 700610 / UA159), this protein is NADP-dependent glyceraldehyde-3-phosphate dehydrogenase (gapN).